A 341-amino-acid polypeptide reads, in one-letter code: S-adenosylmethionine:tRNA ribosyltransferase-isomerase (341 aa).

It belongs to the QueA family. As to quaternary structure, monomer.

It is found in the cytoplasm. It carries out the reaction 7-aminomethyl-7-carbaguanosine(34) in tRNA + S-adenosyl-L-methionine = epoxyqueuosine(34) in tRNA + adenine + L-methionine + 2 H(+). It participates in tRNA modification; tRNA-queuosine biosynthesis. In terms of biological role, transfers and isomerizes the ribose moiety from AdoMet to the 7-aminomethyl group of 7-deazaguanine (preQ1-tRNA) to give epoxyqueuosine (oQ-tRNA). The polypeptide is S-adenosylmethionine:tRNA ribosyltransferase-isomerase (Staphylococcus epidermidis (strain ATCC 35984 / DSM 28319 / BCRC 17069 / CCUG 31568 / BM 3577 / RP62A)).